Reading from the N-terminus, the 1366-residue chain is DNA-directed RNA polymerase subunit beta' (1366 aa).

Positions 1 to 20 (MTSSKPKKTSRVRKTTKNSK) are enriched in basic residues. The interval 1–33 (MTSSKPKKTSRVRKTTKNSKKNNPVTMPALAKT) is disordered. 4 residues coordinate Zn(2+): Cys-248, Cys-315, Cys-322, and Cys-325. The tract at residues 1291-1366 (YTVDMPQSPA…LQEEGLLSDE (76 aa)) is disordered. Residues 1354–1366 (LEGLQEEGLLSDE) are compositionally biased toward low complexity.

It belongs to the RNA polymerase beta' chain family. RpoC2 subfamily. In cyanobacteria the RNAP catalytic core is composed of 2 alpha, 1 beta, 1 beta', 1 gamma and 1 omega subunit. When a sigma factor is associated with the core the holoenzyme is formed, which can initiate transcription. Requires Zn(2+) as cofactor.

The enzyme catalyses RNA(n) + a ribonucleoside 5'-triphosphate = RNA(n+1) + diphosphate. DNA-dependent RNA polymerase catalyzes the transcription of DNA into RNA using the four ribonucleoside triphosphates as substrates. This chain is DNA-directed RNA polymerase subunit beta', found in Prochlorococcus marinus (strain AS9601).